The chain runs to 200 residues: NAD(P)H dehydrogenase (quinone) (200 aa).

One can recognise a Flavodoxin-like domain in the interval 4-191 (VLVLYYSSYG…DIARYQGKHV (188 aa)). Residues 10–15 (SSYGHV) and 79–81 (TRF) contribute to the FMN site. Residue Y12 coordinates NAD(+). W99 provides a ligand contact to substrate. Residues 114-120 (STGTQHG) and H135 contribute to the FMN site.

The protein belongs to the WrbA family. FMN serves as cofactor.

The enzyme catalyses a quinone + NADH + H(+) = a quinol + NAD(+). The catalysed reaction is a quinone + NADPH + H(+) = a quinol + NADP(+). The chain is NAD(P)H dehydrogenase (quinone) from Burkholderia orbicola (strain MC0-3).